The sequence spans 601 residues: Elongation factor 4 (601 aa).

The tr-type G domain occupies Glu-5–Glu-187. GTP contacts are provided by residues Asp-17–Thr-22 and Asn-134–Asp-137.

Belongs to the TRAFAC class translation factor GTPase superfamily. Classic translation factor GTPase family. LepA subfamily.

Its subcellular location is the cell inner membrane. The catalysed reaction is GTP + H2O = GDP + phosphate + H(+). In terms of biological role, required for accurate and efficient protein synthesis under certain stress conditions. May act as a fidelity factor of the translation reaction, by catalyzing a one-codon backward translocation of tRNAs on improperly translocated ribosomes. Back-translocation proceeds from a post-translocation (POST) complex to a pre-translocation (PRE) complex, thus giving elongation factor G a second chance to translocate the tRNAs correctly. Binds to ribosomes in a GTP-dependent manner. This chain is Elongation factor 4, found in Nitratidesulfovibrio vulgaris (strain DSM 19637 / Miyazaki F) (Desulfovibrio vulgaris).